Reading from the N-terminus, the 160-residue chain is Cytochrome b6-f complex subunit 4 (160 aa).

3 consecutive transmembrane segments (helical) span residues 36–56, 95–115, and 131–151; these read LLYI…GLAV, LLGV…PFLE, and TVFL…TLPI.

The protein belongs to the cytochrome b family. PetD subfamily. The 4 large subunits of the cytochrome b6-f complex are cytochrome b6, subunit IV (17 kDa polypeptide, petD), cytochrome f and the Rieske protein, while the 4 small subunits are petG, petL, petM and petN. The complex functions as a dimer.

It is found in the plastid. The protein resides in the chloroplast thylakoid membrane. In terms of biological role, component of the cytochrome b6-f complex, which mediates electron transfer between photosystem II (PSII) and photosystem I (PSI), cyclic electron flow around PSI, and state transitions. The sequence is that of Cytochrome b6-f complex subunit 4 from Spinacia oleracea (Spinach).